An 85-amino-acid chain; its full sequence is Cloacin immunity protein (85 aa).

K12 bears the N6-methyllysine mark.

Belongs to the cloacin immunity protein family.

Its function is as follows. This protein complexes with cloacin protein in equimolar amounts and inhibits it by binding with high affinity to the C-terminal catalytic domain of cloacin. The sequence is that of Cloacin immunity protein (cim) from Escherichia coli.